A 456-amino-acid chain; its full sequence is Bifunctional protein GlmU (456 aa).

Residues 1–229 (MLNNTMSVVI…ISETDGVNNR (229 aa)) are pyrophosphorylase. UDP-N-acetyl-alpha-D-glucosamine is bound by residues 11–14 (LAAG), Lys25, Gln76, 81–82 (GT), 103–105 (YGD), Gly140, Glu154, Asn169, and Asn227. Asp105 contributes to the Mg(2+) binding site. Asn227 is a binding site for Mg(2+). Residues 230–250 (LQLSRLERIYQAEQAEKLLLA) form a linker region. The tract at residues 251–456 (GVMLRDPARF…QGWQRPVKKK (206 aa)) is N-acetyltransferase. 2 residues coordinate UDP-N-acetyl-alpha-D-glucosamine: Arg333 and Lys351. His363 functions as the Proton acceptor in the catalytic mechanism. Residues Tyr366 and Asn377 each contribute to the UDP-N-acetyl-alpha-D-glucosamine site. Acetyl-CoA contacts are provided by residues Ala380, 386 to 387 (NY), Ser405, Ala423, and Arg440.

It in the N-terminal section; belongs to the N-acetylglucosamine-1-phosphate uridyltransferase family. This sequence in the C-terminal section; belongs to the transferase hexapeptide repeat family. As to quaternary structure, homotrimer. Mg(2+) serves as cofactor.

The protein resides in the cytoplasm. The enzyme catalyses alpha-D-glucosamine 1-phosphate + acetyl-CoA = N-acetyl-alpha-D-glucosamine 1-phosphate + CoA + H(+). It carries out the reaction N-acetyl-alpha-D-glucosamine 1-phosphate + UTP + H(+) = UDP-N-acetyl-alpha-D-glucosamine + diphosphate. It participates in nucleotide-sugar biosynthesis; UDP-N-acetyl-alpha-D-glucosamine biosynthesis; N-acetyl-alpha-D-glucosamine 1-phosphate from alpha-D-glucosamine 6-phosphate (route II): step 2/2. Its pathway is nucleotide-sugar biosynthesis; UDP-N-acetyl-alpha-D-glucosamine biosynthesis; UDP-N-acetyl-alpha-D-glucosamine from N-acetyl-alpha-D-glucosamine 1-phosphate: step 1/1. The protein operates within bacterial outer membrane biogenesis; LPS lipid A biosynthesis. Its function is as follows. Catalyzes the last two sequential reactions in the de novo biosynthetic pathway for UDP-N-acetylglucosamine (UDP-GlcNAc). The C-terminal domain catalyzes the transfer of acetyl group from acetyl coenzyme A to glucosamine-1-phosphate (GlcN-1-P) to produce N-acetylglucosamine-1-phosphate (GlcNAc-1-P), which is converted into UDP-GlcNAc by the transfer of uridine 5-monophosphate (from uridine 5-triphosphate), a reaction catalyzed by the N-terminal domain. The polypeptide is Bifunctional protein GlmU (Enterobacter sp. (strain 638)).